The chain runs to 267 residues: Hydrolase FUB4 (267 aa).

Active-site charge relay system residues include Ser-93, Asp-183, and His-243.

The protein belongs to the AB hydrolase 3 family.

The protein operates within mycotoxin biosynthesis. Its function is as follows. Hydrolase; part of the gene cluster that mediates the biosynthesis of fusaric acid, a mycotoxin with low to moderate toxicity to animals and humans, but with high phytotoxic properties. L-aspartate is suggested as fusaric acid amino acid precursor that is activated and further processed to O-acetyl-L-homoserine by cluster enzymes aspartate kinase FUB3 and homoserine O-acetyltransferase FUB5, as well as enzymes of the primary metabolism. The polyketide synthase (PKS) FUB1 generates the triketide trans-2-hexenal which is presumptively released by the hydrolase FUB4 and linked to the NRPS-bound amino acid precursor by NAD(P)-dependent dehydrogenase FUB6. FUB1, FUB4, and the non-canonical NRPS Fub8 may form an enzyme complex. Further processing of the NRPS-bound intermediate might be carried out by FUB6 and the sulfhydrylase FUB7, enabling a spontaneous electrocyclization to close the carbon backbone of fusaric acid. Dihydrofusaric acid is likely to be released via reduction by the thioester reductase (TR) domain of FUB8 whereupon the final oxidation to fusaric acid may (also) be performed by the FMN-dependent dehydrogenase FUB9. The protein is Hydrolase FUB4 of Gibberella moniliformis (strain M3125 / FGSC 7600) (Maize ear and stalk rot fungus).